The following is a 296-amino-acid chain: Nucleotide-binding protein spyM18_0713 (296 aa).

13 to 20 (GMSGAGKT) contacts ATP. A GTP-binding site is contributed by 63–66 (DMRS).

It belongs to the RapZ-like family.

Displays ATPase and GTPase activities. In Streptococcus pyogenes serotype M18 (strain MGAS8232), this protein is Nucleotide-binding protein spyM18_0713.